We begin with the raw amino-acid sequence, 519 residues long: MVRAQRTKRASVTDIYKGCKASGTCPPDVLNKVEQNTLADKILKYGSVGVFFGGLGIGTGKGTGGATGYVPLRPGVRVGGTPTVVRPAVIPEIIGPTELIPVDSIAPIDPEAPSIVSLTDSGAAADLFPSEAETIAEVHPTPVDIGIDTPIVAGGRDAILEVVDTNPPTRFSVTRTQYDNPSFQIISESTPITGEASLADHVFVFEGSGGQHVGAVTEEIELDTYPSRYSFEIEEATPPRRTSTPIERISQEFRNLRRALYNRRLTEQVQVKNPLFLTTPSKLVRFQFDNPVFDEEVTQIFERDVAEVEEPPDRDFLDIDRLGRPLLTESTEGRIRLSRLGQRASIQTRSGTRVGSRVHFYTDLSTINTEEPIELELLGEHSGDASVIEEPLQSTVIDMNLDDVEAIQDTIDTADDYNSADLLLDNAIEEFNNSQLVFGTSDRSSSAYSIPRFESPRETIVYVQDIEGNQVIYPGPTERPTIIFPLPSAPAVVIHTLDKSFDYYLHPSLRKKRRKRKYL.

The Nuclear localization signal motif lies at 1–10 (MVRAQRTKRA). A disulfide bridge links Cys-19 with Cys-25. Positions 511–518 (KKRRKRKY) match the Nuclear localization signal motif.

This sequence belongs to the papillomaviridae L2 protein family. Interacts with major capsid protein L1. Interacts with E2; this interaction inhibits E2 transcriptional activity but not the DNA replication function E2. Interacts with host GADD45GIP1. Interacts with host HSPA8; this interaction is required for L2 nuclear translocation. Interacts with host importins KPNB2 and KPNB3. Forms a complex with importin alpha2-beta1 heterodimers via interaction with the importin alpha2 adapter. Interacts with host DYNLT1; this interaction is essential for virus intracellular transport during entry. Interacts (via C-terminus) with host retromer subunits VPS35 and VPS29. In terms of processing, highly phosphorylated.

Its subcellular location is the virion. It is found in the host nucleus. The protein resides in the host early endosome. It localises to the host Golgi apparatus. Minor protein of the capsid that localizes along the inner surface of the virion, within the central cavities beneath the L1 pentamers. Plays a role in capsid stabilization through interaction with the major capsid protein L1. Once the virion enters the host cell, L2 escorts the genomic DNA into the nucleus by promoting escape from the endosomal compartments and traffic through the host Golgi network. Mechanistically, the C-terminus of L2 possesses a cell-penetrating peptide that protudes from the host endosome, interacts with host cytoplasmic retromer cargo and thereby mediates the capsid delivery to the host trans-Golgi network. Plays a role through its interaction with host dynein in the intracellular microtubule-dependent transport of viral capsid toward the nucleus. Mediates the viral genome import into the nucleus through binding to host importins. Once within the nucleus, L2 localizes viral genomes to host PML bodies in order to activate early gene expression for establishment of infection. Later on, promotes late gene expression by interacting with the viral E2 protein and by inhibiting its transcriptional activation functions. During virion assembly, encapsidates the genome by direct interaction with the viral DNA. In Homo sapiens (Human), this protein is Minor capsid protein L2.